Here is a 278-residue protein sequence, read N- to C-terminus: Dermonecrotic toxin LspiSicTox-betaIE2iii (278 aa).

H5 is a catalytic residue. Mg(2+)-binding residues include E25 and D27. The active-site Nucleophile is the H41. 2 disulfide bridges follow: C45–C51 and C47–C190. D85 lines the Mg(2+) pocket.

It belongs to the arthropod phospholipase D family. Class II subfamily. It depends on Mg(2+) as a cofactor. As to expression, expressed by the venom gland.

Its subcellular location is the secreted. It carries out the reaction an N-(acyl)-sphingosylphosphocholine = an N-(acyl)-sphingosyl-1,3-cyclic phosphate + choline. The enzyme catalyses an N-(acyl)-sphingosylphosphoethanolamine = an N-(acyl)-sphingosyl-1,3-cyclic phosphate + ethanolamine. It catalyses the reaction a 1-acyl-sn-glycero-3-phosphocholine = a 1-acyl-sn-glycero-2,3-cyclic phosphate + choline. The catalysed reaction is a 1-acyl-sn-glycero-3-phosphoethanolamine = a 1-acyl-sn-glycero-2,3-cyclic phosphate + ethanolamine. Functionally, dermonecrotic toxins cleave the phosphodiester linkage between the phosphate and headgroup of certain phospholipids (sphingolipid and lysolipid substrates), forming an alcohol (often choline) and a cyclic phosphate. This toxin acts on sphingomyelin (SM). It may also act on ceramide phosphoethanolamine (CPE), lysophosphatidylcholine (LPC) and lysophosphatidylethanolamine (LPE), but not on lysophosphatidylserine (LPS), and lysophosphatidylglycerol (LPG). It acts by transphosphatidylation, releasing exclusively cyclic phosphate products as second products. Induces dermonecrosis, hemolysis, increased vascular permeability, edema, inflammatory response, and platelet aggregation. This chain is Dermonecrotic toxin LspiSicTox-betaIE2iii, found in Loxosceles spinulosa (Recluse spider).